The sequence spans 443 residues: MAKKKGLFTVLKRIFISEVNSEKKEKRRKWTFWKLRIKKRLPSITAPPEHRTSHESHEEQKEEIVSDVGEISQVSCSRQLDSIEESKGSTSPETADLVVQYQMFLNRQEEVLAATRIQTAFRGHLARKALRALKGIVKLQAYIRGRAVRRQAMTTLKCLQSVVNIQSQVCGKRTQIPGGVHRDYEESNIFNDNILKVDTNGQKRWDDSLLTKEEKEAVVMSKKEASLRRERIKEYAVTHRKSAESYQKRSNTKWKYWLDEWVDTQLTKSKELEDLDFSSKTKPKDETLNEKQLKTPRNSSPRRLVNNHRRQVSIGEDEQSPAAVTITTPTYMVATESAKAKSRSLSSPRIRPRSFDTQSESYSPYKNKLCLTTSMMSEAPSKVRIANNGSNTRPSAYQQRSPGLRGFNIGPLKSCNNNNTLLNDLSINSERSLPSWNKQSSLR.

A calmodulin-binding region spans residues 5–20 (KGLFTVLKRIFISEVN). Short sequence motifs (nuclear localization signal) lie at residues 11–18 (LKRIFISE) and 27–34 (RRKWTFWK). The interval 44–65 (ITAPPEHRTSHESHEEQKEEIV) is disordered. A compositionally biased stretch (basic and acidic residues) spans 48-64 (PEHRTSHESHEEQKEEI). IQ domains follow at residues 113–138 (AATR…GIVK) and 139–161 (LQAY…CLQS). The span at 277 to 293 (FSSKTKPKDETLNEKQL) shows a compositional bias: basic and acidic residues. The disordered stretch occupies residues 277 to 361 (FSSKTKPKDE…PRSFDTQSES (85 aa)).

This sequence belongs to the IQD family. Binds to multiple calmodulin (CaM) in the presence of Ca(2+) and CaM-like proteins. As to expression, expressed in hypocotyls, cotyledons, leaves and petioles.

The protein localises to the nucleus. Its subcellular location is the cytoplasm. It localises to the cytoskeleton. In terms of biological role, may be involved in cooperative interactions with calmodulins or calmodulin-like proteins. Recruits calmodulin proteins to microtubules, thus being a potential scaffold in cellular signaling and trafficking. Regulates cell shape and elongation in aerial organs (i.e. epidermis pavement cells) probably by regulating cortical microtubules (MT) arrays orientation. May associate with nucleic acids and regulate gene expression at the transcriptional or post-transcriptional level. This is Protein IQ-DOMAIN 11 from Arabidopsis thaliana (Mouse-ear cress).